Consider the following 2528-residue polypeptide: Squalestatin tetraketide synthase clz2 (2528 aa).

Residues 14 to 409 (TVPIAIVGMS…GANAHVILES (396 aa)) form the Ketosynthase family 3 (KS3) domain. Residues C187, H291, and H331 each act as for beta-ketoacyl synthase activity in the active site. The interval 420–457 (VNGHHQKNGTTNGHKGANGTTNELNGTNGTANGHDITT) is disordered. Residues 436 to 452 (ANGTTNELNGTNGTANG) are compositionally biased toward low complexity. The segment at 538–856 (GAQWFAMGRE…PYLSCLLRGQ (319 aa)) is malonyl-CoA:ACP transacylase (MAT) domain. The segment at 925 to 1063 (HDLLGSLIPG…GRIAIELDTS (139 aa)) is N-terminal hotdog fold. The PKS/mFAS DH domain maps to 925-1239 (HDLLGSLIPG…NQSVGQIALQ (315 aa)). Residues 925–1239 (HDLLGSLIPG…NQSVGQIALQ (315 aa)) form a dehydratase (DH) domain region. Catalysis depends on H957, which acts as the Proton acceptor; for dehydratase activity. The interval 1083-1239 (TRSVDPSNLY…NQSVGQIALQ (157 aa)) is C-terminal hotdog fold. D1148 (proton donor; for dehydratase activity) is an active-site residue. A methyltransferase (CMet) domain region spans residues 1390–1590 (LYRYYTDAIK…GLDVELRDCD (201 aa)). Residues 1817-2130 (GLIDTLQFSK…AGKHMGKIVI (314 aa)) are enoyl reductase (ER) (ER) domain. The segment at 2153-2331 (ASYLIVGGLG…AVSIDLGMVQ (179 aa)) is ketoreductase (KR) domain. Residues 2408–2430 (RARDAKEQSNSQGGGTDSKISPG) are disordered. Residues 2441 to 2518 (EAIDVVGRAI…ALATTVATKS (78 aa)) form the Carrier domain. S2478 carries the post-translational modification O-(pantetheine 4'-phosphoryl)serine.

It functions in the pathway secondary metabolite biosynthesis. Highly reducing polyketide synthase (HR-PKS); part of the gene cluster that mediates the biosynthesis of squalestatin S1 (SQS1, also known as zaragozic acid A), a heavily oxidized fungal polyketide that offers potent cholesterol lowering activity by targeting squalene synthase (SS). SQS1 is composed of a 2,8-dioxobicyclic[3.2.1]octane-3,4,5-tricarboxyclic acid core that is connected to two lipophilic polyketide arms. These initial steps feature the priming of an unusual benzoic acid starter unit onto the highly reducing polyketide synthase clz14, followed by oxaloacetate extension and product release to generate a tricarboxylic acid containing product. The phenylalanine ammonia lyase (PAL) clz10 and the acyl-CoA ligase clz12 are involved in transforming phenylalanine into benzoyl-CoA. The citrate synthase-like protein clz17 is involved in connecting the C-alpha-carbons of the hexaketide chain and oxaloacetate to afford the tricarboxylic acid unit. The potential hydrolytic enzymes, clz11 and clz13, are in close proximity to pks2 and may participate in product release. On the other side, the tetraketide arm is synthesized by a the squalestatin tetraketide synthase clz2 and enzymatically esterified to the core in the last biosynthetic step, by the acetyltransferase clz6. The biosynthesis of the tetraketide must involve 3 rounds of chain extension. After the first and second rounds methyl-transfer occurs, and in all rounds of extension the ketoreductase and dehydratase are active. The enoyl reductase and C-MeT of clz2 are not active in the final round of extension. The acetyltransferase clz6 appears to have a broad substrate selectivity for its acyl CoA substrate, allowing the in vitro synthesis of novel squalestatins. The biosynthesis of SQS1 requires several oxidative steps likely performed by oxidoreductases clz3, clz15 and clz16. Finally, in support of the identification of the cluster as being responsible for SQS1 production, the cluster contains a gene encoding a putative squalene synthase (SS) clz20, suggesting a likely mechanism for self-resistance. This Cochliobolus lunatus (Filamentous fungus) protein is Squalestatin tetraketide synthase clz2.